We begin with the raw amino-acid sequence, 358 residues long: Histidinol-phosphate aminotransferase (358 aa).

N6-(pyridoxal phosphate)lysine is present on Lys-210.

The protein belongs to the class-II pyridoxal-phosphate-dependent aminotransferase family. Histidinol-phosphate aminotransferase subfamily. Homodimer. The cofactor is pyridoxal 5'-phosphate.

It catalyses the reaction L-histidinol phosphate + 2-oxoglutarate = 3-(imidazol-4-yl)-2-oxopropyl phosphate + L-glutamate. Its pathway is amino-acid biosynthesis; L-histidine biosynthesis; L-histidine from 5-phospho-alpha-D-ribose 1-diphosphate: step 7/9. In Clostridium beijerinckii (strain ATCC 51743 / NCIMB 8052) (Clostridium acetobutylicum), this protein is Histidinol-phosphate aminotransferase.